The sequence spans 293 residues: MSRTYKATGINLKSMPFGEADRLLTILTREQGLVRAVAPGCRKPKSKLGGRSALFVVNDLMLVQGRSLDKIAQAETLESYPGLSQNLAKLTTSQYLAELTLYQALSGQPQTELWDLFCQQLTQLQNATLAQVPCCLIHGTLKLLAGAGIAPQVHACCVTHQPLDPPTSNPTWRVGFSAGAGGTVTLTGPPRPRTAIQQAAEQAIAYPLGADYRVQGKLSAQELALLQDLNPAEIQPASPLPLPLIATYPLVIWQGVESALRHYAEAYFDRPIRSAALIDTCFTPLPDLTSVPS.

This sequence belongs to the RecO family.

Involved in DNA repair and RecF pathway recombination. The chain is DNA repair protein RecO from Acaryochloris marina (strain MBIC 11017).